Reading from the N-terminus, the 92-residue chain is Kappa-scoloptoxin(15)-Ssd2a (92 aa).

Positions 1–20 (MKMVYLGLFLIITSCVISSG) are cleaved as a signal peptide.

Post-translationally, contains 3 disulfide bonds. Expressed by the venom gland.

Its subcellular location is the secreted. In terms of biological role, inhibits voltage-gated potassium channels (Kv) (IC(50)=about 10 nM), when tested on DRG neurons. This is Kappa-scoloptoxin(15)-Ssd2a from Scolopendra dehaani (Thai centipede).